The sequence spans 420 residues: Gamma-glutamyl phosphate reductase (420 aa).

It belongs to the gamma-glutamyl phosphate reductase family.

The protein localises to the cytoplasm. The catalysed reaction is L-glutamate 5-semialdehyde + phosphate + NADP(+) = L-glutamyl 5-phosphate + NADPH + H(+). It participates in amino-acid biosynthesis; L-proline biosynthesis; L-glutamate 5-semialdehyde from L-glutamate: step 2/2. Catalyzes the NADPH-dependent reduction of L-glutamate 5-phosphate into L-glutamate 5-semialdehyde and phosphate. The product spontaneously undergoes cyclization to form 1-pyrroline-5-carboxylate. The chain is Gamma-glutamyl phosphate reductase from Shewanella denitrificans (strain OS217 / ATCC BAA-1090 / DSM 15013).